The following is a 269-amino-acid chain: 4-hydroxy-tetrahydrodipicolinate reductase (269 aa).

Residues 8-13 and E34 contribute to the NAD(+) site; that span reads GAAGRM. R35 serves as a coordination point for NADP(+). NAD(+) is bound by residues 98–100 and 122–125; these read GTT and APNY. H155 functions as the Proton donor/acceptor in the catalytic mechanism. H156 contributes to the (S)-2,3,4,5-tetrahydrodipicolinate binding site. The active-site Proton donor is the K159. Position 165–166 (165–166) interacts with (S)-2,3,4,5-tetrahydrodipicolinate; it reads GT.

The protein belongs to the DapB family.

Its subcellular location is the cytoplasm. The catalysed reaction is (S)-2,3,4,5-tetrahydrodipicolinate + NAD(+) + H2O = (2S,4S)-4-hydroxy-2,3,4,5-tetrahydrodipicolinate + NADH + H(+). It catalyses the reaction (S)-2,3,4,5-tetrahydrodipicolinate + NADP(+) + H2O = (2S,4S)-4-hydroxy-2,3,4,5-tetrahydrodipicolinate + NADPH + H(+). Its pathway is amino-acid biosynthesis; L-lysine biosynthesis via DAP pathway; (S)-tetrahydrodipicolinate from L-aspartate: step 4/4. In terms of biological role, catalyzes the conversion of 4-hydroxy-tetrahydrodipicolinate (HTPA) to tetrahydrodipicolinate. The protein is 4-hydroxy-tetrahydrodipicolinate reductase of Vibrio atlanticus (strain LGP32) (Vibrio splendidus (strain Mel32)).